The following is a 416-amino-acid chain: Caspase-9 (416 aa).

The CARD domain occupies 1–92 (MDEADRRLLR…DMLASFLRTN (92 aa)). The residue at position 125 (Thr-125) is a Phosphothreonine; by MAPK1. Tyr-153 carries the post-translational modification Phosphotyrosine; by ABL1. Catalysis depends on residues His-237 and Cys-287. Residues 294–320 (HGFEVASTSPEDESPGSNPEPDATPFQ) are disordered. Ser-302, Ser-307, and Ser-310 each carry phosphoserine. A propeptide spanning residues 316–330 (ATPFQEGLRTFDQLD) is cleaved from the precursor. Arg-355 carries the (Microbial infection) ADP-riboxanated arginine modification.

This sequence belongs to the peptidase C14A family. As to quaternary structure, heterotetramer that consists of two anti-parallel arranged heterodimers, each one formed by a 35 kDa (p35) and a 10 kDa (p10) subunit. Caspase-9 and APAF1 bind to each other via their respective NH2-terminal CED-3 homologous domains in the presence of cytochrome C and ATP. Interacts (inactive form) with EFHD2. Interacts with HAX1. Interacts with BIRC2/c-IAP1, XIAP/BIRC4, BIRC5/survivin, BIRC6/bruce and BIRC7/livin. Interacts with ABL1 (via SH3 domain); the interaction is direct and increases in the response of cells to genotoxic stress and ABL1/c-Abl activation. Interacts with BCL2L10. Interacts with NleF from pathogenic E.coli. In terms of processing, cleavages at Asp-315 by granzyme B and at Asp-330 by caspase-3 generate the two active subunits. Caspase-8 and -10 can also be involved in these processing events. Phosphorylated at Thr-125 by MAPK1/ERK2. Phosphorylation at Thr-125 is sufficient to block caspase-9 processing and subsequent caspase-3 activation. Phosphorylation on Tyr-153 by ABL1/c-Abl; occurs in the response of cells to DNA damage. Post-translationally, (Microbial infection) ADP-riboxanation by C.violaceum CopC blocks CASP9 processing, preventing CASP9 activation and ability to mediate intrinsic apoptosis. In terms of processing, ubiquitinated by BIRC6; this activity is inhibited by DIABLO/SMAC. As to expression, ubiquitous, with highest expression in the heart, moderate expression in liver, skeletal muscle, and pancreas. Low levels in all other tissues. Within the heart, specifically expressed in myocytes.

It catalyses the reaction Strict requirement for an Asp residue at position P1 and with a marked preference for His at position P2. It has a preferred cleavage sequence of Leu-Gly-His-Asp-|-Xaa.. Its activity is regulated as follows. Inhibited by the effector protein NleF that is produced by pathogenic E.coli; this inhibits apoptosis. Inhibited by BIRC6; following inhibition of BIRC6-caspase binding by DIABLO/SMAC, BIRC6 is subjected to caspase cleavage, leading to an increase in active caspases. Its function is as follows. Involved in the activation cascade of caspases responsible for apoptosis execution. Binding of caspase-9 to Apaf-1 leads to activation of the protease which then cleaves and activates effector caspases caspase-3 (CASP3) or caspase-7 (CASP7). Promotes DNA damage-induced apoptosis in a ABL1/c-Abl-dependent manner. Proteolytically cleaves poly(ADP-ribose) polymerase (PARP). Cleaves BIRC6 following inhibition of BIRC6-caspase binding by DIABLO/SMAC. Functionally, lacks activity is an dominant-negative inhibitor of caspase-9. The sequence is that of Caspase-9 (CASP9) from Homo sapiens (Human).